The primary structure comprises 126 residues: Fluoride-specific ion channel FluC (126 aa).

Helical transmembrane passes span 5-25 (FILA…LVGI), 39-59 (TLFI…LFAV), 69-89 (IFLV…SLDT), and 103-123 (AYMI…IQIV). Na(+) contacts are provided by glycine 77 and threonine 80.

Belongs to the fluoride channel Fluc/FEX (TC 1.A.43) family.

It is found in the cell inner membrane. It catalyses the reaction fluoride(in) = fluoride(out). Its activity is regulated as follows. Na(+) is not transported, but it plays an essential structural role and its presence is essential for fluoride channel function. Functionally, fluoride-specific ion channel. Important for reducing fluoride concentration in the cell, thus reducing its toxicity. The sequence is that of Fluoride-specific ion channel FluC from Nitrobacter winogradskyi (strain ATCC 25391 / DSM 10237 / CIP 104748 / NCIMB 11846 / Nb-255).